The primary structure comprises 542 residues: Hydroxylamine reductase (542 aa).

[4Fe-4S] cluster contacts are provided by Cys3, Cys6, Cys15, and Cys21. 8 residues coordinate hybrid [4Fe-2O-2S] cluster: His243, Glu267, Cys311, Cys398, Cys426, Cys451, Glu485, and Lys487. Cys398 carries the cysteine persulfide modification.

The protein belongs to the HCP family. [4Fe-4S] cluster serves as cofactor. It depends on hybrid [4Fe-2O-2S] cluster as a cofactor.

The protein localises to the cytoplasm. It carries out the reaction A + NH4(+) + H2O = hydroxylamine + AH2 + H(+). Functionally, catalyzes the reduction of hydroxylamine to form NH(3) and H(2)O. The protein is Hydroxylamine reductase of Syntrophobacter fumaroxidans (strain DSM 10017 / MPOB).